Consider the following 504-residue polypeptide: MFGEKFRDRQKPMVLVLGLGESGLAMARWCARHGCRLRAADTREVPPNLSALEAHGVDAQFVGGPFSPVLLEGVELVAISPGLSPLAADLLPLIAAAREQGIPVWGELEFFSQALKTLGESGYAPKVIAITGTNGKTTTTSLTGLLCERAGRKVAVAGNISPALLDKLSEAIDNTALPDVWVLELSSFQLETAHTFSPDAAVVLNITQDHLDWHGGLDAYAAAKGRIFGTQTVRVLNRDDSRVMKLAPSEDSEAGMVTFGVTEPKNEGDYGLLRDNGMIWLVEAHDRDASDEPAPKRRRKNEVATPPNIALKRLMPADALRIRGLHNAANALAAYALARAIGLPGASLLHGLREYRGEPHRVELIASIDGIDYVDDSKGTNVGATVAALDGLAQRVVLIAGGDGKGQDFEPLAAPVMRWCRAVMLIGRDAPQIRAALEDTGIAMTDHATLEEATRAAAALAQPGDAVLLSPACASFDMFKGYAHRAAVFRGTVEEIAAERGTMI.

An ATP-binding site is contributed by 132–138; sequence GTNGKTT. The segment covering 286 to 295 has biased composition (basic and acidic residues); sequence DRDASDEPAP. A disordered region spans residues 286-305; that stretch reads DRDASDEPAPKRRRKNEVAT.

This sequence belongs to the MurCDEF family.

The protein resides in the cytoplasm. It catalyses the reaction UDP-N-acetyl-alpha-D-muramoyl-L-alanine + D-glutamate + ATP = UDP-N-acetyl-alpha-D-muramoyl-L-alanyl-D-glutamate + ADP + phosphate + H(+). Its pathway is cell wall biogenesis; peptidoglycan biosynthesis. In terms of biological role, cell wall formation. Catalyzes the addition of glutamate to the nucleotide precursor UDP-N-acetylmuramoyl-L-alanine (UMA). This chain is UDP-N-acetylmuramoylalanine--D-glutamate ligase, found in Paraburkholderia xenovorans (strain LB400).